Reading from the N-terminus, the 299-residue chain is UPF0282 protein TK1681 (299 aa).

Belongs to the UPF0282 family.

This is UPF0282 protein TK1681 from Thermococcus kodakarensis (strain ATCC BAA-918 / JCM 12380 / KOD1) (Pyrococcus kodakaraensis (strain KOD1)).